The sequence spans 286 residues: Polyamine aminopropyltransferase (286 aa).

Residues 3-240 (DLWYSESHAD…GHWLFGFASK (238 aa)) enclose the PABS domain. Gln32 is a binding site for S-methyl-5'-thioadenosine. Positions 63 and 87 each coordinate spermidine. S-methyl-5'-thioadenosine is bound by residues Glu107 and 139–140 (DG). Asp158 acts as the Proton acceptor in catalysis. 158 to 161 (DSTD) provides a ligand contact to spermidine. Pro165 serves as a coordination point for S-methyl-5'-thioadenosine.

The protein belongs to the spermidine/spermine synthase family. In terms of assembly, homodimer or homotetramer.

The protein localises to the cytoplasm. The catalysed reaction is S-adenosyl 3-(methylsulfanyl)propylamine + putrescine = S-methyl-5'-thioadenosine + spermidine + H(+). Its pathway is amine and polyamine biosynthesis; spermidine biosynthesis; spermidine from putrescine: step 1/1. Its function is as follows. Catalyzes the irreversible transfer of a propylamine group from the amino donor S-adenosylmethioninamine (decarboxy-AdoMet) to putrescine (1,4-diaminobutane) to yield spermidine. The chain is Polyamine aminopropyltransferase from Clostridium acetobutylicum (strain ATCC 824 / DSM 792 / JCM 1419 / IAM 19013 / LMG 5710 / NBRC 13948 / NRRL B-527 / VKM B-1787 / 2291 / W).